The primary structure comprises 486 residues: Cardiolipin synthase A (486 aa).

Transmembrane regions (helical) follow at residues 3–23 (TVYT…IAGV) and 38–58 (MAWL…YLAV). 2 PLD phosphodiesterase domains span residues 219–246 (MDLR…VDPR) and 399–426 (EGGL…DMRS). Catalysis depends on residues His-224, Lys-226, Asp-231, His-404, Lys-406, and Asp-411.

The protein belongs to the phospholipase D family. Cardiolipin synthase subfamily. ClsA sub-subfamily.

It localises to the cell inner membrane. It catalyses the reaction 2 a 1,2-diacyl-sn-glycero-3-phospho-(1'-sn-glycerol) = a cardiolipin + glycerol. In terms of biological role, catalyzes the reversible phosphatidyl group transfer from one phosphatidylglycerol molecule to another to form cardiolipin (CL) (diphosphatidylglycerol) and glycerol. The protein is Cardiolipin synthase A of Shigella boydii serotype 4 (strain Sb227).